A 29-amino-acid chain; its full sequence is Cytochrome b6-f complex subunit 8 (29 aa).

The chain crosses the membrane as a helical span at residues 3-23 (ILTLGWVGLLGLFTYSIAMVV).

It belongs to the PetN family. In terms of assembly, the 4 large subunits of the cytochrome b6-f complex are cytochrome b6, subunit IV (17 kDa polypeptide, PetD), cytochrome f and the Rieske protein, while the 4 small subunits are PetG, PetL, PetM and PetN. The complex functions as a dimer.

It localises to the cellular thylakoid membrane. Its function is as follows. Component of the cytochrome b6-f complex, which mediates electron transfer between photosystem II (PSII) and photosystem I (PSI), cyclic electron flow around PSI, and state transitions. This chain is Cytochrome b6-f complex subunit 8, found in Cyanothece sp. (strain PCC 7425 / ATCC 29141).